The primary structure comprises 269 residues: MNSLSTEQLGIGYGDRVIVEDLNISIPKGKITTLIGPNGCGKSTILKTMSRIMRSHAGAVYLNGKAIHKMSTKDIAKDMAILPQTPEAPSGLTVHELVSYGRFPHQSGFGRLNDEDRRIIKWALEETGMAEYAERPIEALSGGQRQRVWIAMALAQGTELLLLDEPTTYLDLAHQLEILQLLDRLNKEQGRTILMVIHDLNHAARFSHYMIALKKGTVIKEGTALEVMTPDILKQVFQIDAEIVTDPRTNKPVCLTYDLIKNEKELVTV.

The ABC transporter domain occupies 4–240; it reads LSTEQLGIGY…DILKQVFQID (237 aa). ATP-binding positions include 36-43 and 160-171; these read GPNGCGKS and LLLLDEPTTYLD.

This sequence belongs to the ABC transporter superfamily. Iron (Fe3+)-hydroxamate importer (TC 3.A.1.14.7) family. As to quaternary structure, the complex is composed of an ATP-binding protein (FhuC), two transmembrane proteins (FhuB and FhuG) and a solute-binding protein (FhuD or YxeB).

The protein resides in the cell membrane. The enzyme catalyses ATP + H2O + Fe(3+)-hydroxamate complex-[hydroxamate-binding protein]Side 1 = ADP + phosphate + Fe(3+)-hydroxamate complexSide 2 + [hydroxamate-binding protein]Side 1.. Functionally, part of the ABC transporter complex FhuBGCD involved in iron(3+)-hydroxamate import. Responsible for energy coupling to the transport system. This chain is Iron(3+)-hydroxamate import ATP-binding protein FhuC (fhuC), found in Bacillus subtilis (strain 168).